Consider the following 959-residue polypeptide: rDNA transcriptional regulator pol5 (959 aa).

Residues Ser-742 and Ser-743 each carry the phosphoserine modification. Residues 936–959 (HQQTSTAASSPQKTGHHENEKTNH) form a disordered region. A compositionally biased stretch (polar residues) spans 937–948 (QQTSTAASSPQK). The segment covering 950 to 959 (GHHENEKTNH) has biased composition (basic and acidic residues).

The protein belongs to the MYBBP1A family. In terms of assembly, interacts with cdc10.

Its subcellular location is the nucleus. In terms of biological role, plays an important role in the regulation of rRNA transcription. Binds to rDNA promoter fragments. In Schizosaccharomyces pombe (strain 972 / ATCC 24843) (Fission yeast), this protein is rDNA transcriptional regulator pol5 (pol5).